Reading from the N-terminus, the 104-residue chain is Secreted RxLR effector protein 54 (104 aa).

Positions 1 to 19 (MIFTLLGLALVATKSACIA) are cleaved as a signal peptide. The RxLR motif lies at 52-55 (RSLR). An N-linked (GlcNAc...) asparagine glycan is attached at asparagine 64.

Belongs to the RxLR effector family.

The protein resides in the secreted. It is found in the host chloroplast envelope. Its subcellular location is the host mitochondrion. It localises to the host nucleus. The protein localises to the host cytoplasm. In terms of biological role, secreted effector that completely suppresses the host cell death induced by cell death-inducing proteins. The protein is Secreted RxLR effector protein 54 of Plasmopara viticola (Downy mildew of grapevine).